The chain runs to 494 residues: Ectonucleoside triphosphate diphosphohydrolase 8 (494 aa).

Residues 1–8 (MRLSWKER) are Cytoplasmic-facing. Residues 9–29 (VFMVLLGVAAASGLTMLILIL) form a helical membrane-spanning segment. The Extracellular segment spans residues 30–465 (VKATNVLLPA…LTQWRAQSYS (436 aa)). A disulfide bond links C78 and C102. The active-site Proton acceptor is E168. The cysteines at positions 245 and 291 are disulfide-linked. Residues N299 and N303 are each glycosylated (N-linked (GlcNAc...) asparagine). A disulfide bond links C328 and C334. N362 carries an N-linked (GlcNAc...) asparagine glycan. C380 and C402 form a disulfide bridge. Residues 466–486 (IWIAGVVFAVLTLVAILGAAA) traverse the membrane as a helical segment. Residues 487-494 (VQLFWTQD) lie on the Cytoplasmic side of the membrane.

Belongs to the GDA1/CD39 NTPase family. It depends on Ca(2+) as a cofactor. Mg(2+) serves as cofactor. Post-translationally, N-glycosylated. In terms of tissue distribution, present in liver, and at lower level in jejunum and kidney. Limited to the canalicular domain of hepatocytes (at protein level).

The protein localises to the cell membrane. The enzyme catalyses a ribonucleoside 5'-triphosphate + 2 H2O = a ribonucleoside 5'-phosphate + 2 phosphate + 2 H(+). Its function is as follows. Canalicular ectonucleoside NTPDase responsible for the main hepatic NTPDase activity. Ectonucleoside NTPDases catalyze the hydrolysis of gamma- and beta-phosphate residues of nucleotides, playing a central role in concentration of extracellular nucleotides. Has activity toward ATP, ADP, UTP and UDP, but not toward AMP. This chain is Ectonucleoside triphosphate diphosphohydrolase 8 (Entpd8), found in Rattus norvegicus (Rat).